The primary structure comprises 294 residues: 3-methyl-2-oxobutanoate hydroxymethyltransferase (294 aa).

Residues 1 to 12 (MSASAESTNATP) are compositionally biased toward polar residues. Positions 1-21 (MSASAESTNATPYGTLPPTAA) are disordered. Residues Asp69 and Asp112 each contribute to the Mg(2+) site. 3-methyl-2-oxobutanoate is bound by residues 69–70 (DS), Asp112, and Lys141. Mg(2+) is bound at residue Glu143. The Proton acceptor role is filled by Glu210.

It belongs to the PanB family. As to quaternary structure, homodecamer; pentamer of dimers. It depends on Mg(2+) as a cofactor.

The protein resides in the cytoplasm. The enzyme catalyses 3-methyl-2-oxobutanoate + (6R)-5,10-methylene-5,6,7,8-tetrahydrofolate + H2O = 2-dehydropantoate + (6S)-5,6,7,8-tetrahydrofolate. It participates in cofactor biosynthesis; (R)-pantothenate biosynthesis; (R)-pantoate from 3-methyl-2-oxobutanoate: step 1/2. Its function is as follows. Catalyzes the reversible reaction in which hydroxymethyl group from 5,10-methylenetetrahydrofolate is transferred onto alpha-ketoisovalerate to form ketopantoate. The polypeptide is 3-methyl-2-oxobutanoate hydroxymethyltransferase (Albidiferax ferrireducens (strain ATCC BAA-621 / DSM 15236 / T118) (Rhodoferax ferrireducens)).